Consider the following 351-residue polypeptide: Holliday junction branch migration complex subunit RuvB (351 aa).

Residues 4-199 (DNPQFNQWYE…FGIINSLQYY (196 aa)) are large ATPase domain (RuvB-L). Residues Leu-38, Arg-39, Gly-80, Lys-83, Thr-84, Thr-85, 146 to 148 (EDY), Arg-189, Tyr-199, and Arg-236 contribute to the ATP site. Thr-84 is a Mg(2+) binding site. The small ATPAse domain (RuvB-S) stretch occupies residues 200-270 (TPEELQQIVV…IVTIGLDKLR (71 aa)). The segment at 273-351 (NRGLDETDHK…HLGHAYQRKL (79 aa)) is head domain (RuvB-H). 2 residues coordinate DNA: Arg-328 and Arg-333.

The protein belongs to the RuvB family. As to quaternary structure, homohexamer. Forms an RuvA(8)-RuvB(12)-Holliday junction (HJ) complex. HJ DNA is sandwiched between 2 RuvA tetramers; dsDNA enters through RuvA and exits via RuvB. An RuvB hexamer assembles on each DNA strand where it exits the tetramer. Each RuvB hexamer is contacted by two RuvA subunits (via domain III) on 2 adjacent RuvB subunits; this complex drives branch migration. In the full resolvosome a probable DNA-RuvA(4)-RuvB(12)-RuvC(2) complex forms which resolves the HJ.

It localises to the cytoplasm. It catalyses the reaction ATP + H2O = ADP + phosphate + H(+). Functionally, the RuvA-RuvB-RuvC complex processes Holliday junction (HJ) DNA during genetic recombination and DNA repair, while the RuvA-RuvB complex plays an important role in the rescue of blocked DNA replication forks via replication fork reversal (RFR). RuvA specifically binds to HJ cruciform DNA, conferring on it an open structure. The RuvB hexamer acts as an ATP-dependent pump, pulling dsDNA into and through the RuvAB complex. RuvB forms 2 homohexamers on either side of HJ DNA bound by 1 or 2 RuvA tetramers; 4 subunits per hexamer contact DNA at a time. Coordinated motions by a converter formed by DNA-disengaged RuvB subunits stimulates ATP hydrolysis and nucleotide exchange. Immobilization of the converter enables RuvB to convert the ATP-contained energy into a lever motion, pulling 2 nucleotides of DNA out of the RuvA tetramer per ATP hydrolyzed, thus driving DNA branch migration. The RuvB motors rotate together with the DNA substrate, which together with the progressing nucleotide cycle form the mechanistic basis for DNA recombination by continuous HJ branch migration. Branch migration allows RuvC to scan DNA until it finds its consensus sequence, where it cleaves and resolves cruciform DNA. This is Holliday junction branch migration complex subunit RuvB from Leuconostoc mesenteroides subsp. mesenteroides (strain ATCC 8293 / DSM 20343 / BCRC 11652 / CCM 1803 / JCM 6124 / NCDO 523 / NBRC 100496 / NCIMB 8023 / NCTC 12954 / NRRL B-1118 / 37Y).